The primary structure comprises 227 residues: Cytidylate kinase (227 aa).

ATP is bound at residue 12–20 (GPSGAGKGT).

This sequence belongs to the cytidylate kinase family. Type 1 subfamily.

Its subcellular location is the cytoplasm. It catalyses the reaction CMP + ATP = CDP + ADP. The enzyme catalyses dCMP + ATP = dCDP + ADP. The chain is Cytidylate kinase from Marinomonas sp. (strain MWYL1).